The following is a 114-amino-acid chain: uncharacterized protein (114 aa).

Positions 18–29 are enriched in basic residues; sequence TRKRNSHKKVTK. Disordered regions lie at residues 18–47 and 65–108; these read TRKRNSHKKVTKRAVEKRKQDSTRQKRRTG and SRPR…KLLN. Basic and acidic residues predominate over residues 30–41; the sequence is RAVEKRKQDSTR.

This is an uncharacterized protein from Homo sapiens (Human).